Here is a 122-residue protein sequence, read N- to C-terminus: uncharacterized protein (122 aa).

The protein resides in the mitochondrion. This is an uncharacterized protein from Arabidopsis thaliana (Mouse-ear cress).